A 305-amino-acid chain; its full sequence is UDP-3-O-acyl-N-acetylglucosamine deacetylase (305 aa).

Zn(2+) is bound by residues His78, His237, and Asp241. The active-site Proton donor is His264.

This sequence belongs to the LpxC family. It depends on Zn(2+) as a cofactor.

The catalysed reaction is a UDP-3-O-[(3R)-3-hydroxyacyl]-N-acetyl-alpha-D-glucosamine + H2O = a UDP-3-O-[(3R)-3-hydroxyacyl]-alpha-D-glucosamine + acetate. The protein operates within glycolipid biosynthesis; lipid IV(A) biosynthesis; lipid IV(A) from (3R)-3-hydroxytetradecanoyl-[acyl-carrier-protein] and UDP-N-acetyl-alpha-D-glucosamine: step 2/6. In terms of biological role, catalyzes the hydrolysis of UDP-3-O-myristoyl-N-acetylglucosamine to form UDP-3-O-myristoylglucosamine and acetate, the committed step in lipid A biosynthesis. This chain is UDP-3-O-acyl-N-acetylglucosamine deacetylase, found in Cupriavidus necator (strain ATCC 17699 / DSM 428 / KCTC 22496 / NCIMB 10442 / H16 / Stanier 337) (Ralstonia eutropha).